The following is a 184-amino-acid chain: Ribosome-recycling factor (184 aa).

It belongs to the RRF family.

The protein resides in the cytoplasm. In terms of biological role, responsible for the release of ribosomes from messenger RNA at the termination of protein biosynthesis. May increase the efficiency of translation by recycling ribosomes from one round of translation to another. This is Ribosome-recycling factor from Stenotrophomonas maltophilia (strain K279a).